A 380-amino-acid polypeptide reads, in one-letter code: Chaperone protein DnaJ (380 aa).

The J domain maps to 5–72 (DFYEVLGVAK…NKRAAYDQYG (68 aa)). The CR-type zinc-finger motif lies at 140–218 (GKDAQIRIPS…CGGQGKVKRQ (79 aa)). The Zn(2+) site is built by Cys-153, Cys-156, Cys-170, Cys-173, Cys-192, Cys-195, Cys-206, and Cys-209. 4 CXXCXGXG motif repeats span residues 153–160 (CDTCHGSG), 170–177 (CTTCNGMG), 192–199 (CPHCRGTG), and 206–213 (CTSCGGQG). A disordered region spans residues 359-380 (KGGAKHSPSGESWTDRLKSFFS). Basic and acidic residues predominate over residues 371-380 (WTDRLKSFFS).

The protein belongs to the DnaJ family. As to quaternary structure, homodimer. It depends on Zn(2+) as a cofactor.

It is found in the cytoplasm. Functionally, participates actively in the response to hyperosmotic and heat shock by preventing the aggregation of stress-denatured proteins and by disaggregating proteins, also in an autonomous, DnaK-independent fashion. Unfolded proteins bind initially to DnaJ; upon interaction with the DnaJ-bound protein, DnaK hydrolyzes its bound ATP, resulting in the formation of a stable complex. GrpE releases ADP from DnaK; ATP binding to DnaK triggers the release of the substrate protein, thus completing the reaction cycle. Several rounds of ATP-dependent interactions between DnaJ, DnaK and GrpE are required for fully efficient folding. Also involved, together with DnaK and GrpE, in the DNA replication of plasmids through activation of initiation proteins. This Delftia acidovorans (strain DSM 14801 / SPH-1) protein is Chaperone protein DnaJ.